Here is a 78-residue protein sequence, read N- to C-terminus: Large ribosomal subunit protein bL28 (78 aa).

The interval 1–21 (MSRVCQLSGKRANNGMAVSHS) is disordered.

The protein belongs to the bacterial ribosomal protein bL28 family.

The protein is Large ribosomal subunit protein bL28 of Synechococcus sp. (strain RCC307).